The chain runs to 103 residues: uncharacterized protein (103 aa).

The protein localises to the plastid. Its subcellular location is the chloroplast. This is an uncharacterized protein from Auxenochlorella pyrenoidosa (Freshwater green alga).